A 224-amino-acid polypeptide reads, in one-letter code: Ribose-5-phosphate isomerase A (224 aa).

Substrate-binding positions include threonine 26–threonine 29, aspartate 81–aspartate 84, and lysine 94–glycine 97. The active-site Proton acceptor is the glutamate 103. Lysine 121 is a substrate binding site.

It belongs to the ribose 5-phosphate isomerase family. As to quaternary structure, homodimer.

It catalyses the reaction aldehydo-D-ribose 5-phosphate = D-ribulose 5-phosphate. It functions in the pathway carbohydrate degradation; pentose phosphate pathway; D-ribose 5-phosphate from D-ribulose 5-phosphate (non-oxidative stage): step 1/1. Catalyzes the reversible conversion of ribose-5-phosphate to ribulose 5-phosphate. The chain is Ribose-5-phosphate isomerase A from Listeria monocytogenes serovar 1/2a (strain ATCC BAA-679 / EGD-e).